We begin with the raw amino-acid sequence, 997 residues long: NLR family CARD domain-containing protein 4 (997 aa).

The CARD domain occupies 1–88 (MDLIRKNYAE…FFYEDLIGQR (88 aa)). The segment at 95–300 (EEDLENLADH…RCGALIAETS (206 aa)) is nucleotide-binding domain (NBD). The NACHT domain occupies 165 to 478 (SPCVIEGEAG…VTKGEDFLNK (314 aa)). ATP is bound at residue 171-178 (GEAGKGKT). Positions 358 to 465 (MNTQTTLFST…RLSQLLSSED (108 aa)) are winged-helix domain (WHD). 12 LRR repeats span residues 550–570 (LFSEKCLYINSHNISSHHIEF), 629–652 (NQSIQTLEVTLRDFHQLNKKDIKY), 708–731 (MTEMKTLSILNLHSEHLQGGLLEG), 735–758 (LVGLEKLVFHNIKIDKNDAKTLAE), 760–785 (ILSLKKLKRLSISHISNIGDGMESIA), 797–820 (ELKLIDCCLSAKALRSLGQSLYSL), 821–843 (SHIEILDLSGNYLLEEGKESVEE), 851–875 (LDAIRTLMLPGGTDVKFCLEAVLPT), 884–905 (ELAFKRWNLTNDDLMTLASYIN), 908–935 (FENLSFLDLSDNCAQSAGWLSLTAILQY), 937–958 (PNLTYVNFSTEDLFTPDPDLVR), and 972–994 (TMELNNWQLDDFDLAQIKKAKNM).

The protein localises to the cytoplasm. The protein resides in the cytosol. Its function is as follows. Key component of inflammasomes that indirectly senses specific proteins from pathogenic bacteria and fungi and responds by assembling an inflammasome complex that promotes caspase-1 activation, cytokine production and macrophage pyroptosis. In Xenopus tropicalis (Western clawed frog), this protein is NLR family CARD domain-containing protein 4 (nlrc4).